We begin with the raw amino-acid sequence, 216 residues long: Protein Syd (216 aa).

This sequence belongs to the Syd family.

Its subcellular location is the cell inner membrane. Its function is as follows. Interacts with the SecY protein in vivo. May bind preferentially to an uncomplexed state of SecY, thus functioning either as a chelating agent for excess SecY in the cell or as a regulatory factor that negatively controls the translocase function. The sequence is that of Protein Syd from Shewanella sp. (strain MR-7).